A 78-amino-acid polypeptide reads, in one-letter code: Large ribosomal subunit protein bL28B (78 aa).

The protein belongs to the bacterial ribosomal protein bL28 family.

The chain is Large ribosomal subunit protein bL28B (rpmB2) from Streptomyces coelicolor (strain ATCC BAA-471 / A3(2) / M145).